Reading from the N-terminus, the 201-residue chain is 3-isopropylmalate dehydratase small subunit (201 aa).

The protein belongs to the LeuD family. LeuD type 1 subfamily. As to quaternary structure, heterodimer of LeuC and LeuD.

The catalysed reaction is (2R,3S)-3-isopropylmalate = (2S)-2-isopropylmalate. Its pathway is amino-acid biosynthesis; L-leucine biosynthesis; L-leucine from 3-methyl-2-oxobutanoate: step 2/4. Catalyzes the isomerization between 2-isopropylmalate and 3-isopropylmalate, via the formation of 2-isopropylmaleate. The sequence is that of 3-isopropylmalate dehydratase small subunit from Shewanella putrefaciens (strain CN-32 / ATCC BAA-453).